A 758-amino-acid chain; its full sequence is 5-methyltetrahydropteroyltriglutamate--homocysteine methyltransferase (758 aa).

Residues 17–20 and lysine 117 each bind 5-methyltetrahydropteroyltri-L-glutamate; that span reads RELK. Residues 434 to 436 and glutamate 487 each bind L-homocysteine; that span reads IGS. L-methionine is bound by residues 434 to 436 and glutamate 487; that span reads IGS. Residues 518–519 and tryptophan 564 each bind 5-methyltetrahydropteroyltri-L-glutamate; that span reads RC. Residue aspartate 602 participates in L-homocysteine binding. Aspartate 602 contacts L-methionine. Glutamate 608 is a 5-methyltetrahydropteroyltri-L-glutamate binding site. Zn(2+)-binding residues include histidine 644, cysteine 646, and glutamate 668. Histidine 697 serves as the catalytic Proton donor. Zn(2+) is bound at residue cysteine 729.

Belongs to the vitamin-B12 independent methionine synthase family. Requires Zn(2+) as cofactor.

The enzyme catalyses 5-methyltetrahydropteroyltri-L-glutamate + L-homocysteine = tetrahydropteroyltri-L-glutamate + L-methionine. It participates in amino-acid biosynthesis; L-methionine biosynthesis via de novo pathway; L-methionine from L-homocysteine (MetE route): step 1/1. Functionally, catalyzes the transfer of a methyl group from 5-methyltetrahydrofolate to homocysteine resulting in methionine formation. In Yersinia pestis (strain Pestoides F), this protein is 5-methyltetrahydropteroyltriglutamate--homocysteine methyltransferase.